Here is a 381-residue protein sequence, read N- to C-terminus: Succinyl-diaminopimelate desuccinylase (381 aa).

Position 71 (His71) interacts with Zn(2+). Asp73 is a catalytic residue. Asp104 serves as a coordination point for Zn(2+). Glu136 functions as the Proton acceptor in the catalytic mechanism. Residues Glu137, Glu166, and His351 each contribute to the Zn(2+) site.

The protein belongs to the peptidase M20A family. DapE subfamily. In terms of assembly, homodimer. Zn(2+) is required as a cofactor. Co(2+) serves as cofactor.

The catalysed reaction is N-succinyl-(2S,6S)-2,6-diaminopimelate + H2O = (2S,6S)-2,6-diaminopimelate + succinate. It functions in the pathway amino-acid biosynthesis; L-lysine biosynthesis via DAP pathway; LL-2,6-diaminopimelate from (S)-tetrahydrodipicolinate (succinylase route): step 3/3. Catalyzes the hydrolysis of N-succinyl-L,L-diaminopimelic acid (SDAP), forming succinate and LL-2,6-diaminopimelate (DAP), an intermediate involved in the bacterial biosynthesis of lysine and meso-diaminopimelic acid, an essential component of bacterial cell walls. The protein is Succinyl-diaminopimelate desuccinylase of Ehrlichia chaffeensis (strain ATCC CRL-10679 / Arkansas).